The following is a 269-amino-acid chain: Regulating synaptic membrane exocytosis protein 4 (269 aa).

The region spanning 115 to 233 (PMGDVEIGLQ…DLTTLAVGWY (119 aa)) is the C2 domain. Residues S254 and S257 each carry the phosphoserine modification.

In terms of assembly, binds PPFIA3. Does not bind RAB3.

The protein resides in the synapse. Functionally, regulates synaptic membrane exocytosis. The sequence is that of Regulating synaptic membrane exocytosis protein 4 (RIMS4) from Homo sapiens (Human).